Consider the following 227-residue polypeptide: Holliday junction branch migration complex subunit RuvA (227 aa).

The domain I stretch occupies residues 1-64 (MFESISGILT…EDALRLFGFS (64 aa)). Residues 65–143 (NVQERTLFLS…LTDAASCAQS (79 aa)) are domain II. The tract at residues 144–158 (QTDDRAAHPSNLGCA) is flexible linker. The tract at residues 159-227 (PHAREIEDLV…HPHAVAPAAE (69 aa)) is domain III.

This sequence belongs to the RuvA family. Homotetramer. Forms an RuvA(8)-RuvB(12)-Holliday junction (HJ) complex. HJ DNA is sandwiched between 2 RuvA tetramers; dsDNA enters through RuvA and exits via RuvB. An RuvB hexamer assembles on each DNA strand where it exits the tetramer. Each RuvB hexamer is contacted by two RuvA subunits (via domain III) on 2 adjacent RuvB subunits; this complex drives branch migration. In the full resolvosome a probable DNA-RuvA(4)-RuvB(12)-RuvC(2) complex forms which resolves the HJ.

The protein localises to the cytoplasm. The RuvA-RuvB-RuvC complex processes Holliday junction (HJ) DNA during genetic recombination and DNA repair, while the RuvA-RuvB complex plays an important role in the rescue of blocked DNA replication forks via replication fork reversal (RFR). RuvA specifically binds to HJ cruciform DNA, conferring on it an open structure. The RuvB hexamer acts as an ATP-dependent pump, pulling dsDNA into and through the RuvAB complex. HJ branch migration allows RuvC to scan DNA until it finds its consensus sequence, where it cleaves and resolves the cruciform DNA. The chain is Holliday junction branch migration complex subunit RuvA from Treponema pallidum (strain Nichols).